A 432-amino-acid chain; its full sequence is Putative D-alanyl-D-alanine carboxypeptidase (432 aa).

Residues 7 to 25 form a helical; Signal-anchor membrane-spanning segment; it reads ATVLLTFSLSAFAVEYPVL.

It belongs to the peptidase S12 family. YfeW subfamily.

The protein localises to the cell inner membrane. The enzyme catalyses Preferential cleavage: (Ac)2-L-Lys-D-Ala-|-D-Ala. Also transpeptidation of peptidyl-alanyl moieties that are N-acyl substituents of D-alanine.. The polypeptide is Putative D-alanyl-D-alanine carboxypeptidase (Salmonella paratyphi A (strain ATCC 9150 / SARB42)).